The following is an 859-amino-acid chain: MRRCRWAALALGLLRLCLAQANFAPHFFDNGVGSTNGNMALFSLPEDTPVGSHVYTLNGTDPEGDPISYHISFDPSTRSVFSVDPTFGNITLVEELDREREDEIEAIISISDGLNLVAEKVVILVTDANDEAPRFIQEPYVALVPEDIPAGSIIFKVHAVDRDTGSGGSVTYFLQNLHSPFAVDRHSGVLRLQAGATLDYERSRTHYITVVAKDGGGRLHGADVVFSATTTVTVNVEDVQDMAPVFVGTPYYGYVYEDTLPGSEVLKVVAMDGDRGKPNRILYSLVNGNDGAFEINETSGAISITQSPAQLQREVYELHVQVTEMSPAGSPAAQATVPVTIRIVDLNNHPPTFYGESGPQNRFELSMNEHPPQGEILRGLKITVNDSDQGANAKFNLQLVGPRGIFRVVPQTVLNEAQVTIIVENSAAIDFEKSKVLTFKLLAVEVNTPEKFSSTADVVIQLLDTNDNVPKFDSLYYVARIPENAPGGSSVVAVTAVDPDTGPWGEVKYSTYGTGADLFLIHPSTGLIYTQPWASLDAEATARYNFYVKAEDMEGKYSVAEVFITLLDVNDHPPQFGKSVQKKTMVLGTPVKIEAIDEDAEEPNNLVDYSITHAEPANVFDINSHTGEIWLKNSIRSLDALHNITPGRDCLWSLEVQAKDRGSPSFSTTALLKIDITDAETLSRSPMAAFLIQTKDNPMKAVGVLAGTMATVVAITVLISTATFWRNKKSNKVLPMRRVLRKRPSPAPRTIRIEWLKSKSTKAATKFMLKEKPPNENCNNNSPESSLLPRAPALPPPPSVAPSTGAAQWTVPTVSGSLTPQPTQPPPKPKTMGSPVQSTLISELKQKFEKKSVHNKAYF.

The signal sequence occupies residues 1–19; the sequence is MRRCRWAALALGLLRLCLA. The Extracellular portion of the chain corresponds to 20-700; it reads QANFAPHFFD…LIQTKDNPMK (681 aa). 6 Cadherin domains span residues 36 to 135, 136 to 246, 247 to 353, 359 to 472, 473 to 576, and 573 to 688; these read NGNM…APRF, IQEP…APVF, VGTP…PPTF, PQNR…VPKF, DSLY…PPQF, and PPQF…SPMA. 2 N-linked (GlcNAc...) asparagine glycosylation sites follow: asparagine 58 and asparagine 89. Asparagine 296 is a glycosylation site (N-linked (GlcNAc...) asparagine). The helical transmembrane segment at 701–721 threads the bilayer; that stretch reads AVGVLAGTMATVVAITVLIST. Topologically, residues 722–859 are cytoplasmic; it reads ATFWRNKKSN…KKSVHNKAYF (138 aa). The segment at 770–838 is disordered; that stretch reads KEKPPNENCN…PKTMGSPVQS (69 aa). Residues 775-791 show a composition bias toward low complexity; sequence NENCNNNSPESSLLPRA.

In terms of assembly, interacts with PROM1. In terms of processing, undergoes proteolytic cleavage; produces a soluble 95 kDa N-terminal fragment and a 25 kDa cell-associated C-terminal fragment.

The protein resides in the cell membrane. Functionally, potential calcium-dependent cell-adhesion protein. May be required for the structural integrity of the outer segment (OS) of photoreceptor cells. The protein is Cadherin-related family member 1 of Homo sapiens (Human).